We begin with the raw amino-acid sequence, 240 residues long: Ubiquinone biosynthesis O-methyltransferase (240 aa).

Positions 44, 64, 85, and 129 each coordinate S-adenosyl-L-methionine.

The protein belongs to the methyltransferase superfamily. UbiG/COQ3 family.

It carries out the reaction a 3-demethylubiquinol + S-adenosyl-L-methionine = a ubiquinol + S-adenosyl-L-homocysteine + H(+). It catalyses the reaction a 3-(all-trans-polyprenyl)benzene-1,2-diol + S-adenosyl-L-methionine = a 2-methoxy-6-(all-trans-polyprenyl)phenol + S-adenosyl-L-homocysteine + H(+). The protein operates within cofactor biosynthesis; ubiquinone biosynthesis. Functionally, O-methyltransferase that catalyzes the 2 O-methylation steps in the ubiquinone biosynthetic pathway. This Escherichia coli O157:H7 protein is Ubiquinone biosynthesis O-methyltransferase.